Here is a 420-residue protein sequence, read N- to C-terminus: 3-phosphoshikimate 1-carboxyvinyltransferase (420 aa).

3 residues coordinate 3-phosphoshikimate: Lys20, Ser21, and Arg25. Lys20 serves as a coordination point for phosphoenolpyruvate. Arg119 provides a ligand contact to phosphoenolpyruvate. The 3-phosphoshikimate site is built by Ser161, Ser162, Gln163, Ser189, Asp303, Gln326, and Lys330. Position 163 (Gln163) interacts with phosphoenolpyruvate. Residue Asp303 is the Proton acceptor of the active site. 3 residues coordinate phosphoenolpyruvate: Arg334, Arg375, and Lys400.

It belongs to the EPSP synthase family. Monomer.

The protein resides in the cytoplasm. It carries out the reaction 3-phosphoshikimate + phosphoenolpyruvate = 5-O-(1-carboxyvinyl)-3-phosphoshikimate + phosphate. The protein operates within metabolic intermediate biosynthesis; chorismate biosynthesis; chorismate from D-erythrose 4-phosphate and phosphoenolpyruvate: step 6/7. Its function is as follows. Catalyzes the transfer of the enolpyruvyl moiety of phosphoenolpyruvate (PEP) to the 5-hydroxyl of shikimate-3-phosphate (S3P) to produce enolpyruvyl shikimate-3-phosphate and inorganic phosphate. In Dehalococcoides mccartyi (strain ATCC BAA-2266 / KCTC 15142 / 195) (Dehalococcoides ethenogenes (strain 195)), this protein is 3-phosphoshikimate 1-carboxyvinyltransferase.